Reading from the N-terminus, the 480-residue chain is MSFPQLGYPQYLSAAGPGAYGGERPGVLAAAAAAAAAASSGRPGAAELGGGAGAAAVTSVLGMYAAAGPYAGAPNYSAFLPYAADLSLFSQMGSQYELKDNPGVHPATFAAHTAPAYYPYGQFQYGDPGRPKNATRESTSTLKAWLNEHRKNPYPTKGEKIMLAIITKMTLTQVSTWFANARRRLKKENKVTWGARSKDQEDGALFGSDTEGDPEKAEDDEEIDLESIDIDKIDEHDGDQSNEDDEDKAEAPHAPAAPSALARDQGSPLAAADVLKPQDSPLGLAKEAPEPGSTRLLSPGAAAGGLQGAPHGKPKIWSLAETATSPDGAPKASPPPPAGHPGAHGPSAGAPLQHPAFLPSHGLYTCHIGKFSNWTNSAFLAQGSLLNMRSFLGVGAPHAAPHGPHLPAPPPPQPPVAIAPGALNGDKASVRSSPTLPERDLVPRPDSPAQQLKSPFQPVRDNSLAPQEGTPRILAALPSA.

The segment at residues 125–188 (YGDPGRPKNA…ANARRRLKKE (64 aa)) is a DNA-binding region (homeobox; TALE-type). Disordered stretches follow at residues 190–268 (KVTW…QGSP), 280–354 (SPLG…PLQH), and 401–480 (PHGP…LPSA). Positions 210–228 (TEGDPEKAEDDEEIDLESI) are enriched in acidic residues. Positions 229-239 (DIDKIDEHDGD) are enriched in basic and acidic residues. Residue Ser-241 is modified to Phosphoserine. Composition is skewed to low complexity over residues 252 to 262 (PHAPAAPSALA) and 340 to 351 (HPGAHGPSAGAP). A compositionally biased stretch (pro residues) spans 404–417 (PHLPAPPPPQPPVA).

This sequence belongs to the TALE/IRO homeobox family.

It localises to the nucleus. The sequence is that of Iroquois-class homeodomain protein IRX-1 (IRX1) from Homo sapiens (Human).